A 782-amino-acid chain; its full sequence is MKKNSYTRLSIAILSTLYSVSSLADLKSQCLAGVPHFTGELITGNPNDLPVYIEADQARLNQSVSASYEGNVEIQQGNRQLRAQRADISQQKQPNGLQRLAHVRGGFEYQDHQIQLKGEEAQVQLNTKNTDIKNADYQLVDRQGRGKAESIALREDYRLMTNAVFTSCLPQDNAWSIEAKEMRQHIQEEYAEMWHARFKVHGVPIFYTPYLQLPIGDRRRSGLLLPNFGTSNRDGYFYEQPFYWNIAPNLDATMTPKYMSKRGWQLNGEFRYLSPIGEGKIAGEYLKQDRLTDYRNRDRSRHLFYWTHHSSFLQNWRLNLDYTRVSDQRYFSDFDSAYGSSTDGYADQKFRVAYYQPHYNIAISAKQFQIFNEVDIGPYRALPQVDFNYYQNALFDSPLNFKLFSQVVHFDNKSPLMPKAWRFHAEPSINLPLSNRYGSLNIETKLYATHYQQTQGRAAEAEQVERKINRVLPQVKVDLQTVLASQQTFIEGYTQTLEPHVQYLYRPYKDQSNIGSKLNNAYLGFGYDSSLLQQDYFGLFRDRRYSGLDRIASANQFTVGGTTRIYDKKGNERFNFSAGQIYYLQDSRIDNSKENSTYGRSSSWSLASNWKINDQWRWQGSYQYDTRLNKSSLGNFTLEYNPTGNNIIQLSYRYASQQYIDQNLTSAANRYGQDIKQLGLTVAWALTDQWAVVARHYQDLALRKPVEQYLGLEYSTCCWAINVGARRSVTSKENQTANQIFYDKSIGINIELRGLGRDDHKGNIEKMLQRGKLPYLQAFSLY.

A signal peptide spans 1–24 (MKKNSYTRLSIAILSTLYSVSSLA).

Belongs to the LptD family. Component of the lipopolysaccharide transport and assembly complex. Interacts with LptE and LptA.

It is found in the cell outer membrane. Together with LptE, is involved in the assembly of lipopolysaccharide (LPS) at the surface of the outer membrane. This chain is LPS-assembly protein LptD, found in Pasteurella multocida (strain Pm70).